Here is a 423-residue protein sequence, read N- to C-terminus: Growth hormone-releasing hormone receptor (423 aa).

Positions 1–22 are cleaved as a signal peptide; sequence MDGLMWATRILCLLSLCGVTLG. Over 23–130 the chain is Extracellular; it reads HLHLECDFIT…KEKSYFSTVK (108 aa). Disulfide bonds link C41–C64, C55–C96, and C78–C112. N-linked (GlcNAc...) asparagine glycosylation is found at N49 and N50. The helical transmembrane segment at 131 to 151 threads the bilayer; that stretch reads IIYTTGHSISIVALCVAIAIL. Residues 152–167 lie on the Cytoplasmic side of the membrane; sequence VALRRLHCPRNYIHTQ. A helical membrane pass occupies residues 168 to 188; that stretch reads LFATFILKASAVFLKDAAIFQ. Residues 189 to 210 are Extracellular-facing; sequence GDSTDHCSMSTVLCKVSVAISH. The helical transmembrane segment at 211–231 threads the bilayer; the sequence is LATMTNFSWLLAEAVYLSCLL. The Cytoplasmic portion of the chain corresponds to 232–240; sequence ASTSPRSKP. A helical transmembrane segment spans residues 241 to 261; the sequence is AFWWLVLAGWGLPVLCTGTWV. The Extracellular segment spans residues 262–283; that stretch reads GCKLAFEDTECWDLDNSSPCWW. Residues 284–304 form a helical membrane-spanning segment; that stretch reads IIKGPIVLSVGVNFGLFLNII. The Cytoplasmic portion of the chain corresponds to 305–331; sequence CILLRKLEPAQGGLHTRAQYWRLSKST. The helical transmembrane segment at 332 to 352 threads the bilayer; that stretch reads LLLIPLFGIHYIIFNFLPDSA. Over 353 to 357 the chain is Extracellular; that stretch reads GLDIR. A helical membrane pass occupies residues 358 to 378; it reads VPLELGLGSFQGFIVAVLYCF. Residues 379–423 lie on the Cytoplasmic side of the membrane; that stretch reads LNQEVRTEISRKWYGHDPELLPARRTCTEWTTPPRSRLKVLTSEC.

Belongs to the G-protein coupled receptor 2 family. Pituitary gland.

The protein resides in the cell membrane. In terms of biological role, receptor for GRF, coupled to G proteins which activate adenylyl cyclase. Stimulates somatotroph cell growth, growth hormone gene transcription and growth hormone secretion. This Mus musculus (Mouse) protein is Growth hormone-releasing hormone receptor (Ghrhr).